Reading from the N-terminus, the 123-residue chain is uncharacterized protein (123 aa).

Positions 17–117 (SNDNAFLVDV…NNQDKGWKQN (101 aa)) constitute a Rhodanese domain.

This is an uncharacterized protein from Rickettsia rickettsii.